The following is a 720-amino-acid chain: DNA replication licensing factor mcm7-B (720 aa).

The C4-type zinc finger occupies 183-210; the sequence is CDQCGAETYQPIQSPTFMPLIMCPSREC. The 207-residue stretch at 331–537 folds into the MCM domain; sequence FYEKLAASIA…NDLRLAQHIT (207 aa). 8 residues coordinate ATP: Y344, G383, A385, K386, S387, N488, R513, and R603. The short motif at 512–515 is the Arginine finger element; the sequence is SRFD.

The protein belongs to the MCM family. As to quaternary structure, component of the mcm2-7 complex (RLF-M). The complex forms a toroidal hexameric ring with the proposed subunit order mcm2-mcm6-mcm4-mcm7-mcm3-mcm5. The heterodimer of mmcm3/mcm5 interacts with mcm4, mmcm6, mcm7 and weakly with mcm2. The N-terminus is required for interaction with mmcm3, though this interaction may not be direct, and remains in a complex with mmcm3 throughout the cell cycle. Begins to associate with zmcm6 at the neurula stage. Component of the replisome complex. Component of the CMG helicase complex, composed of the mcm2-7 complex, the GINS complex and cdc45. Post-translationally, ubiquitinated by traip when forks converge following formation of DNA interstrand cross-links. Short ubiquitin chains on mcm7 promote recruitment of DNA glycosylase neil3. If the interstrand cross-link cannot be cleaved by neil3, the ubiquitin chains continue to grow on mcm7, promoting the unloading of the CMG helicase complex by the vcp/p97 ATPase.

Its subcellular location is the nucleus. The protein resides in the chromosome. The enzyme catalyses ATP + H2O = ADP + phosphate + H(+). In terms of biological role, acts as a component of the mcm2-7 complex (mcm complex) which is the putative replicative helicase essential for 'once per cell cycle' DNA replication initiation and elongation in eukaryotic cells. The active ATPase sites in the mcm2-7 ring are formed through the interaction surfaces of two neighboring subunits such that a critical structure of a conserved arginine finger motif is provided in trans relative to the ATP-binding site of the Walker A box of the adjacent subunit. The six ATPase active sites, however, are likely to contribute differentially to the complex helicase activity. The existence of maternal and zygotic forms of mcm3 and mcm6 suggests that specific forms of mcm2-7 complexes may be used during different stages of development. This is DNA replication licensing factor mcm7-B (mcm7-b) from Xenopus laevis (African clawed frog).